Consider the following 275-residue polypeptide: Anamorsin homolog (275 aa).

The interval 1 to 147 (MTSASIHIGS…QSASSAAATG (147 aa)) is N-terminal SAM-like domain. A linker region spans residues 148–183 (RINLGGAKTKVKLSLDDDDDDQLIDEDDLLNGGGGM). Residues cysteine 203, cysteine 209, cysteine 212, and cysteine 214 each coordinate [2Fe-2S] cluster. Residues 203 to 214 (CGGRKACDNCTC) form a fe-S binding site A region. The [4Fe-4S] cluster site is built by cysteine 238, cysteine 241, cysteine 249, and cysteine 252. 2 short sequence motifs (cx2C motif) span residues 238 to 241 (CGNC) and 249 to 252 (CAGC). Positions 238–252 (CGNCAKGDAFRCAGC) are fe-S binding site B.

Belongs to the anamorsin family. In terms of assembly, monomer. [2Fe-2S] cluster serves as cofactor. The cofactor is [4Fe-4S] cluster.

The protein resides in the cytoplasm. It localises to the mitochondrion intermembrane space. Component of the cytosolic iron-sulfur (Fe-S) protein assembly (CIA) machinery. Required for the maturation of extramitochondrial Fe-S proteins. Part of an electron transfer chain functioning in an early step of cytosolic Fe-S biogenesis, facilitating the de novo assembly of a [4Fe-4S] cluster on the cytosolic Fe-S scaffold complex. Electrons are transferred from NADPH via a FAD- and FMN-containing diflavin oxidoreductase. Together with the diflavin oxidoreductase, also required for the assembly of the diferric tyrosyl radical cofactor of ribonucleotide reductase (RNR), probably by providing electrons for reduction during radical cofactor maturation in the catalytic small subunit. This chain is Anamorsin homolog, found in Thalassiosira pseudonana (Marine diatom).